The sequence spans 1406 residues: DNA-directed RNA polymerase subunit beta' (1406 aa).

Zn(2+) contacts are provided by Cys-72, Cys-74, Cys-87, and Cys-90. Mg(2+) is bound by residues Asp-462, Asp-464, and Asp-466. Zn(2+) is bound by residues Cys-816, Cys-889, Cys-896, and Cys-899.

It belongs to the RNA polymerase beta' chain family. The RNAP catalytic core consists of 2 alpha, 1 beta, 1 beta' and 1 omega subunit. When a sigma factor is associated with the core the holoenzyme is formed, which can initiate transcription. It depends on Mg(2+) as a cofactor. Zn(2+) serves as cofactor.

It carries out the reaction RNA(n) + a ribonucleoside 5'-triphosphate = RNA(n+1) + diphosphate. Its function is as follows. DNA-dependent RNA polymerase catalyzes the transcription of DNA into RNA using the four ribonucleoside triphosphates as substrates. The polypeptide is DNA-directed RNA polymerase subunit beta' (Psychrobacter sp. (strain PRwf-1)).